The following is a 151-amino-acid chain: UPF0208 membrane protein plu3094 (151 aa).

Helical transmembrane passes span Phe46–Leu65 and Leu69–Gly91.

This sequence belongs to the UPF0208 family.

The protein localises to the cell inner membrane. The protein is UPF0208 membrane protein plu3094 of Photorhabdus laumondii subsp. laumondii (strain DSM 15139 / CIP 105565 / TT01) (Photorhabdus luminescens subsp. laumondii).